The chain runs to 464 residues: Sensor protein IrlS (464 aa).

The Periplasmic segment spans residues 1 to 13 (MIRRLLPRTLRAR). A helical transmembrane segment spans residues 14-34 (LTALIILSTAATLALSGVALY). The Cytoplasmic segment spans residues 35–166 (SALHNRLVGM…DHALLRAYAY (132 aa)). Residues 167-187 (TVVVIEVLAVVLTAALAYGIA) form a helical membrane-spanning segment. Positions 188 to 241 (MLGLSPLRRLVARAEQMSSSRLAQPLPELDTSGELKEMEHAFNAMLKRLDESFV) constitute an HAMP domain. Residues 188–464 (MLGLSPLRRL…FWLKFPAHAA (277 aa)) are Periplasmic-facing. The 215-residue stretch at 249–463 (NLAHDMRTPL…TFWLKFPAHA (215 aa)) folds into the Histidine kinase domain. Position 252 is a phosphohistidine; by autocatalysis (His-252).

The protein resides in the cell inner membrane. It catalyses the reaction ATP + protein L-histidine = ADP + protein N-phospho-L-histidine.. Member of the two-component regulatory system IrlR/IrlS. May be involved in invasion of eukaryotic cells and heavy-metal resistance. Probably activates IrlR by phosphorylation. This is Sensor protein IrlS (irlS) from Burkholderia pseudomallei (strain K96243).